A 344-amino-acid polypeptide reads, in one-letter code: Sesquiterpene synthase 9 (344 aa).

Mg(2+) contacts are provided by D88, N224, S228, and E232. Residues 88–92 (DEYSD) carry the DDXXD motif motif. An NSE/DTE motif motif is present at residues 224–232 (NDMLSWNVE). Positions 313 and 314 each coordinate (2E,6E)-farnesyl diphosphate.

Belongs to the terpene synthase family. It depends on Mg(2+) as a cofactor.

Terpene cyclase that catalyzes the cyclization of farnesyl diphosphate (FPP) to a single major sesquiterpene scaffold whose chemical structure is still unknown. This Postia placenta (strain ATCC 44394 / Madison 698-R) (Brown rot fungus) protein is Sesquiterpene synthase 9.